The sequence spans 155 residues: MTIKTIEGTLDARNSRFALVVSRFNDFIGQKLVEGAVDCIVRHGGSEEQIALYKCPGAFELPSVAKKVAVSGRYDAVITLGAIIRGATSHYDVIAAEATKGVAQVGLDTMIPVTFGVLTTDNLEQAIERAGTKAGNKGFDAALAAIEMVNLYQQV.

5-amino-6-(D-ribitylamino)uracil-binding positions include Phe24, Ala58–Glu60, and Ala82–Ile84. Ala87–Thr88 is a (2S)-2-hydroxy-3-oxobutyl phosphate binding site. Catalysis depends on His90, which acts as the Proton donor. Phe115 is a 5-amino-6-(D-ribitylamino)uracil binding site. Arg129 contacts (2S)-2-hydroxy-3-oxobutyl phosphate.

This sequence belongs to the DMRL synthase family.

The enzyme catalyses (2S)-2-hydroxy-3-oxobutyl phosphate + 5-amino-6-(D-ribitylamino)uracil = 6,7-dimethyl-8-(1-D-ribityl)lumazine + phosphate + 2 H2O + H(+). The protein operates within cofactor biosynthesis; riboflavin biosynthesis; riboflavin from 2-hydroxy-3-oxobutyl phosphate and 5-amino-6-(D-ribitylamino)uracil: step 1/2. Catalyzes the formation of 6,7-dimethyl-8-ribityllumazine by condensation of 5-amino-6-(D-ribitylamino)uracil with 3,4-dihydroxy-2-butanone 4-phosphate. This is the penultimate step in the biosynthesis of riboflavin. This chain is 6,7-dimethyl-8-ribityllumazine synthase, found in Prosthecochloris aestuarii (strain DSM 271 / SK 413).